Reading from the N-terminus, the 459-residue chain is Flavin-containing monooxygenase FMO GS-OX1 (459 aa).

17-22 (GAGAAG) is a binding site for FAD. Position 211 to 216 (211 to 216 (GNYASG)) interacts with NADP(+).

It belongs to the FMO family. The cofactor is FAD. Mainly expressed in leaves. Low levels in flowers and seeds.

The catalysed reaction is a (Z)-omega-(methylsulfanyl)-N-sulfo-alkylhydroximate S-glucoside + NADPH + O2 + H(+) = a (Z)-omega-(methylsulfinyl)-alkyl-glucosinolate + NADP(+) + H2O. Catalyzes the conversion of methylthioalkyl glucosinolates into methylsulfinylalkyl glucosinolates. Able to S-oxygenate both desulfo- and intact 4-methylthiobutyl glucosinolates, but no activity with methionine, dihomomethionine or 5-methylthiopentaldoxime. This Arabidopsis thaliana (Mouse-ear cress) protein is Flavin-containing monooxygenase FMO GS-OX1 (FMOGS-OX1).